The chain runs to 548 residues: Ankyrin repeat domain-containing protein SOWAHA (548 aa).

A signal peptide spans 1 to 19 (MALAAAAAAAAAAAGVSQA). Positions 114–212 (EDNCAPGAPH…PPTAQVPPQK (99 aa)) are disordered. Residues 136–153 (SAPSELQHTPETLPSEVT) show a composition bias toward polar residues. The segment covering 198–212 (GPEPAPPTAQVPPQK) has biased composition (pro residues). Position 258 is a phosphoserine (Ser-258). ANK repeat units lie at residues 344 to 373 (SGFT…RGGA) and 383 to 413 (GGYT…QVHV). Positions 512-548 (PRKKTKIRGGLPSFTEISHRSTPGPLAGLVPSLPPPT) are disordered.

The protein belongs to the SOWAH family.

The chain is Ankyrin repeat domain-containing protein SOWAHA (Sowaha) from Mus musculus (Mouse).